The primary structure comprises 120 residues: Sirohydrochlorin cobaltochelatase (120 aa).

His-9 acts as the Proton acceptor in catalysis. His-9 serves as a coordination point for Co(2+). Substrate contacts are provided by residues Gln-43 and 68-73 (FAAGTH). His-73 lines the Co(2+) pocket.

It belongs to the CbiX family. CbiXS subfamily. In terms of assembly, homotetramer; dimer of dimers.

It catalyses the reaction Co-sirohydrochlorin + 2 H(+) = sirohydrochlorin + Co(2+). It functions in the pathway cofactor biosynthesis; adenosylcobalamin biosynthesis; cob(II)yrinate a,c-diamide from sirohydrochlorin (anaerobic route): step 1/10. Its function is as follows. Catalyzes the insertion of Co(2+) into sirohydrochlorin as part of the anaerobic pathway to cobalamin biosynthesis. The chain is Sirohydrochlorin cobaltochelatase from Sulfurisphaera tokodaii (strain DSM 16993 / JCM 10545 / NBRC 100140 / 7) (Sulfolobus tokodaii).